The sequence spans 87 residues: Mitochondrial import inner membrane translocase subunit TIM8 (87 aa).

The Twin CX3C motif motif lies at 44–68 (CFKKCVESVNDSNLSSQEEQCLSNC). Cystine bridges form between Cys44–Cys68 and Cys48–Cys64.

It belongs to the small Tim family. Heterohexamer; composed of 3 copies of TIM8 and 3 copies of TIM13, named soluble 70 kDa complex. Associates with the TIM22 complex, whose core is composed of TIM18, TIM22 and TIM54. Interacts with the transmembrane regions of multi-pass transmembrane proteins in transit.

Its subcellular location is the mitochondrion inner membrane. The protein resides in the mitochondrion intermembrane space. Its function is as follows. Mitochondrial intermembrane chaperone that participates in the import and insertion of some multi-pass transmembrane proteins into the mitochondrial inner membrane. Also required for the transfer of beta-barrel precursors from the TOM complex to the sorting and assembly machinery (SAM complex) of the outer membrane. Acts as a chaperone-like protein that protects the hydrophobic precursors from aggregation and guide them through the mitochondrial intermembrane space. The TIM8-TIM13 complex is non essential and only mediates the import of few proteins under precise conditions, while the predominant TIM9-TIM10 70 kDa complex is crucial and mediates the import of much more proteins. Strictly required for import of TIM23 in some conditions, when a low membrane potential exists in the mitochondria. This Saccharomyces cerevisiae (strain ATCC 204508 / S288c) (Baker's yeast) protein is Mitochondrial import inner membrane translocase subunit TIM8 (TIM8).